We begin with the raw amino-acid sequence, 234 residues long: Large ribosomal subunit protein uL1 (234 aa).

This sequence belongs to the universal ribosomal protein uL1 family. As to quaternary structure, part of the 50S ribosomal subunit.

Binds directly to 23S rRNA. The L1 stalk is quite mobile in the ribosome, and is involved in E site tRNA release. Functionally, protein L1 is also a translational repressor protein, it controls the translation of the L11 operon by binding to its mRNA. The sequence is that of Large ribosomal subunit protein uL1 from Serratia proteamaculans (strain 568).